The sequence spans 80 residues: uncharacterized protein (80 aa).

This is an uncharacterized protein from Pseudoalteromonas phage PM2 (Bacteriophage PM2).